Reading from the N-terminus, the 252-residue chain is NAD-dependent protein deacetylase (252 aa).

The Deacetylase sirtuin-type domain maps to 1-248; the sequence is MYLVEEAKKV…PEVISHIQSL (248 aa). The NAD(+) site is built by Ala-26, Thr-30, Phe-37, Arg-38, Gln-102, Val-104, Asp-105, and His-120. Phe-37 is a nicotinamide binding site. Nicotinamide contacts are provided by Val-104 and Asp-105. His-120 serves as the catalytic Proton acceptor. Zn(2+) is bound by residues Cys-128, Cys-131, Cys-153, and Cys-155. Positions 191, 192, 216, and 234 each coordinate NAD(+).

It belongs to the sirtuin family. Class U subfamily. The cofactor is Zn(2+).

The protein resides in the cytoplasm. The enzyme catalyses N(6)-acetyl-L-lysyl-[protein] + NAD(+) + H2O = 2''-O-acetyl-ADP-D-ribose + nicotinamide + L-lysyl-[protein]. Functionally, NAD-dependent protein deacetylase which modulates the activities of several enzymes which are inactive in their acetylated form. Deacetylates the N-terminal lysine residue of Alba, the major archaeal chromatin protein and that, in turn, increases Alba's DNA binding affinity, thereby repressing transcription. This is NAD-dependent protein deacetylase from Sulfolobus acidocaldarius (strain ATCC 33909 / DSM 639 / JCM 8929 / NBRC 15157 / NCIMB 11770).